The sequence spans 368 residues: Forkhead box protein I2 (368 aa).

Positions 33 to 54 (QNQQLPQRPAAPPALGYGRNEY) are disordered. A DNA-binding region (fork-head) is located at residues 124–218 (RPPYSYSSLI…DNGNFRRKRK (95 aa)). A disordered region spans residues 243-272 (SLGSDSPRGASALEQSSYGTPESKSRPAGG). The span at 255-264 (LEQSSYGTPE) shows a compositional bias: polar residues.

Its subcellular location is the nucleus. Possible transcriptional activator. The polypeptide is Forkhead box protein I2 (Xenopus tropicalis (Western clawed frog)).